The sequence spans 191 residues: MRDDETTVIGALVHRAVEGDAQATHDLLAHVHPLALRYCRSRLNRLPGDARHFVEDLAQEVCVAVLMALPRYKDTGRPFEAFVFAIAGHKVADLQRAAMRHPGSTAVPSDEMPERPDDSLGPEERALLSSDAAWAKKLLANLPENQRELLVLRVAVGLTAEETGQMLGMSPGAVRVAQHRALSRLRALAEQ.

Residues 27–98 are sigma-70 factor domain-2; the sequence is LLAHVHPLAL…HKVADLQRAA (72 aa). Residues 100 to 122 are disordered; the sequence is RHPGSTAVPSDEMPERPDDSLGP. Basic and acidic residues predominate over residues 112-122; it reads MPERPDDSLGP. The tract at residues 138–187 is sigma-70 factor domain-4; sequence LLANLPENQRELLVLRVAVGLTAEETGQMLGMSPGAVRVAQHRALSRLRA. The segment at residues 160–179 is a DNA-binding region (H-T-H motif); the sequence is AEETGQMLGMSPGAVRVAQH.

The protein belongs to the sigma-70 factor family. ECF subfamily.

Its function is as follows. Sigma factors are initiation factors that promote the attachment of RNA polymerase to specific initiation sites and are then released. Extracytoplasmic function (ECF) sigma factors are held in an inactive form by an anti-sigma factor until released. This alternative sigma factor governs the transcription of the principal sigma factor HrdB (SigA) throughout growth. Acts by binding to the promoter region. This is ECF RNA polymerase sigma factor ShbA from Streptomyces griseus subsp. griseus (strain JCM 4626 / CBS 651.72 / NBRC 13350 / KCC S-0626 / ISP 5235).